Here is a 386-residue protein sequence, read N- to C-terminus: 1-deoxy-D-xylulose 5-phosphate reductoisomerase (386 aa).

S10, G11, S12, V13, N38, and N120 together coordinate NADPH. K121 provides a ligand contact to 1-deoxy-D-xylulose 5-phosphate. E122 is a binding site for NADPH. D146 serves as a coordination point for Mn(2+). 1-deoxy-D-xylulose 5-phosphate contacts are provided by S147, E148, S172, and H195. Residue E148 participates in Mn(2+) binding. G201 contributes to the NADPH binding site. Positions 208, 213, 214, and 217 each coordinate 1-deoxy-D-xylulose 5-phosphate. E217 lines the Mn(2+) pocket.

This sequence belongs to the DXR family. Requires Mg(2+) as cofactor. It depends on Mn(2+) as a cofactor.

It catalyses the reaction 2-C-methyl-D-erythritol 4-phosphate + NADP(+) = 1-deoxy-D-xylulose 5-phosphate + NADPH + H(+). The protein operates within isoprenoid biosynthesis; isopentenyl diphosphate biosynthesis via DXP pathway; isopentenyl diphosphate from 1-deoxy-D-xylulose 5-phosphate: step 1/6. Catalyzes the NADPH-dependent rearrangement and reduction of 1-deoxy-D-xylulose-5-phosphate (DXP) to 2-C-methyl-D-erythritol 4-phosphate (MEP). This chain is 1-deoxy-D-xylulose 5-phosphate reductoisomerase, found in Leptospira biflexa serovar Patoc (strain Patoc 1 / Ames).